The following is a 553-amino-acid chain: Putative transport protein YidE (553 aa).

The next 5 helical transmembrane spans lie at 4–24 (IALT…IGNI), 28–48 (GVGF…HFVD), 65–85 (FGLI…FFAS), 95–115 (LFAV…HKIF), and 158–178 (MSYA…MWLM). RCK C-terminal domains lie at 192 to 276 (KHES…VIGK) and 279 to 361 (DTSL…VVGN). 6 helical membrane-spanning segments follow: residues 371 to 391 (MLPV…PLFV), 393 to 413 (GFPV…ALIL), 437 to 457 (LGIV…FVDT), 464 to 484 (LSWI…VGLL), 493 to 513 (YLTL…LAFA), and 533 to 553 (LVMF…WGMG).

This sequence belongs to the AAE transporter (TC 2.A.81) family. YidE subfamily.

It localises to the cell membrane. The chain is Putative transport protein YidE from Salmonella newport (strain SL254).